A 207-amino-acid chain; its full sequence is ATP-dependent Clp protease proteolytic subunit (207 aa).

The Nucleophile role is filled by serine 111. Residue histidine 136 is part of the active site.

This sequence belongs to the peptidase S14 family. As to quaternary structure, fourteen ClpP subunits assemble into 2 heptameric rings which stack back to back to give a disk-like structure with a central cavity, resembling the structure of eukaryotic proteasomes.

It localises to the cytoplasm. It carries out the reaction Hydrolysis of proteins to small peptides in the presence of ATP and magnesium. alpha-casein is the usual test substrate. In the absence of ATP, only oligopeptides shorter than five residues are hydrolyzed (such as succinyl-Leu-Tyr-|-NHMec, and Leu-Tyr-Leu-|-Tyr-Trp, in which cleavage of the -Tyr-|-Leu- and -Tyr-|-Trp bonds also occurs).. Its function is as follows. Cleaves peptides in various proteins in a process that requires ATP hydrolysis. Has a chymotrypsin-like activity. Plays a major role in the degradation of misfolded proteins. In Yersinia enterocolitica serotype O:8 / biotype 1B (strain NCTC 13174 / 8081), this protein is ATP-dependent Clp protease proteolytic subunit.